The following is a 248-amino-acid chain: Pathogenesis-related thaumatin-like protein 3.4 (248 aa).

The signal sequence occupies residues 1–25 (MARAILWVLLTVMAVSLLLHAGVEG). Cystine bridges form between cysteine 34–cysteine 227, cysteine 75–cysteine 85, cysteine 90–cysteine 96, cysteine 141–cysteine 216, cysteine 146–cysteine 199, cysteine 154–cysteine 164, cysteine 168–cysteine 177, and cysteine 178–cysteine 186. Residue asparagine 235 is glycosylated (N-linked (GlcNAc...) asparagine).

It belongs to the thaumatin family. Mainly expressed in male and female strobili, and, at lower levels, in roots of seedlings and saplings.

May be involved in disease resistance. This is Pathogenesis-related thaumatin-like protein 3.4 from Cryptomeria japonica (Japanese cedar).